The chain runs to 890 residues: Exo-beta-D-glucosaminidase (890 aa).

The signal sequence occupies residues 1–18 (MIAKAVAALLLGSGLASA). A propeptide spanning residues 19–26 (AGTPLTSK) is cleaved from the precursor. Residues Asn-194, Asn-334, and Asn-438 are each glycosylated (N-linked (GlcNAc...) asparagine). The active-site Proton donor is Asp-462. The active-site Nucleophile is the Glu-537. N-linked (GlcNAc...) asparagine glycans are attached at residues Asn-576 and Asn-687.

It belongs to the glycosyl hydrolase 2 family. In terms of assembly, monomer.

It localises to the secreted. The protein localises to the extracellular space. The enzyme catalyses Hydrolysis of chitosan or chitosan oligosaccharides to remove successive D-glucosamine residues from the non-reducing termini.. Functionally, hydrolyzes chitosan and chitooligosaccharides with retention of anomeric configuration. Has no activity against beta-D-galactoside, beta-D-glucuronide, beta-D-mannoside, chitin, glycol chitosan, cellulose, N,N'-diacetylchitibiose and pNP-GlcNAc. The protein is Exo-beta-D-glucosaminidase of Hypocrea virens (Gliocladium virens).